The sequence spans 1237 residues: Putative structural protein VP3 (1237 aa).

A PPPDE domain is found at 963–1178; sequence GFLDKRVGDA…WDVSTAARMQ (216 aa). Catalysis depends on residues histidine 1001 and cysteine 1149.

It localises to the virion. The sequence is that of Putative structural protein VP3 (S3) from Lymantria dispar cypovirus 1 (isolate Rao) (LdCPV-1).